We begin with the raw amino-acid sequence, 146 residues long: Large-conductance mechanosensitive channel (146 aa).

A run of 2 helical transmembrane segments spans residues 12-32 and 88-108; these read AFAM…GGAF and LQAT…IKLI.

The protein belongs to the MscL family. Homopentamer.

It is found in the cell inner membrane. Its function is as follows. Channel that opens in response to stretch forces in the membrane lipid bilayer. May participate in the regulation of osmotic pressure changes within the cell. The chain is Large-conductance mechanosensitive channel from Bacteroides fragilis (strain ATCC 25285 / DSM 2151 / CCUG 4856 / JCM 11019 / LMG 10263 / NCTC 9343 / Onslow / VPI 2553 / EN-2).